A 369-amino-acid chain; its full sequence is MRN complex-interacting protein (369 aa).

S115 is subject to Phosphoserine. Disordered stretches follow at residues 122 to 150 (GGGV…PRKR), 209 to 245 (PSFT…PCPA), and 282 to 317 (AQAE…TPMP). The short motif at 148–151 (RKRK) is the Nuclear localization signal (NLS) element. The segment covering 221–230 (KGRESSREDL) has biased composition (basic and acidic residues). The segment at 223 to 259 (RESSREDLDTMELVPRGEPPCPAQQVRTMSKWEQCLG) is necessary for the association with the MRN complex.

This sequence belongs to the MRNIP family. In terms of assembly, associates with the MRE11-RAD50-NBN (MRN) damage-sensing complex; this association is constitutive. Interacts with MRE11. Interacts with NBN. Interacts with RAD50. In terms of processing, phosphorylated; phosphorylation is constitutive and occurs in the absence of any DNA-damaging stimulus. Phosphorylation on Ser-115 is necessary for its nuclear retention.

The protein localises to the nucleus. Its subcellular location is the nucleoplasm. In terms of biological role, plays a role in the cellular response to DNA damage and the maintenance of genome stability through its association with the MRN damage-sensing complex. Promotes chromatin loading and activity of the MRN complex to facilitate subsequent ATM-mediated DNA damage response signaling and DNA repair. The chain is MRN complex-interacting protein from Bos taurus (Bovine).